The chain runs to 906 residues: Probable disease resistance RPP8-like protein 2 (906 aa).

A coiled-coil region spans residues 15 to 68 (ELLSRESARLNGIDEQVDGLKRQLGRLQSLLKDADAKKNETERVRNFLEDVKDI). The region spanning 144 to 454 (LQERQREIRQ…AEGIITPFHD (311 aa)) is the NB-ARC domain. 190–197 (GMGGIGKT) serves as a coordination point for ATP. LRR repeat units follow at residues 573–597 (LPLL…SIGD), 598–621 (LIHL…LGNL), 623–644 (LLLC…NVLK), 646–671 (MQEL…DLVN), 672–696 (LESL…KLSV), 704–727 (ECTF…SFHD), 740–766 (LLVL…QYRF), 767–790 (PPHL…ILEK), 791–818 (LLHL…GFPQ), and 840–865 (MPCL…KYVT).

Belongs to the disease resistance NB-LRR family. RPP8/HRT subfamily.

In terms of biological role, potential disease resistance protein. The protein is Probable disease resistance RPP8-like protein 2 (RPP8L2) of Arabidopsis thaliana (Mouse-ear cress).